Reading from the N-terminus, the 300-residue chain is Metal tolerance protein 12 (300 aa).

Over Met1 to Lys26 the chain is Cytoplasmic. The helical transmembrane segment at Ile27 to Met47 threads the bilayer. Over Ser48–Ser50 the chain is Vacuolar. A helical membrane pass occupies residues Leu51–Leu71. At Tyr72–Arg91 the chain is on the cytoplasmic side. Residues Phe92–Val112 form a helical membrane-spanning segment. Over Leu113–Asn128 the chain is Vacuolar. Residues Ser129–His149 traverse the membrane as a helical segment. The Cytoplasmic segment spans residues Glu150–Gly160. Residues Ile161–Leu181 traverse the membrane as a helical segment. The Vacuolar segment spans residues Ile182–Gly186. The chain crosses the membrane as a helical span at residues Trp187–Ile207. The Cytoplasmic segment spans residues Pro208–Ser300.

This sequence belongs to the cation diffusion facilitator (CDF) transporter (TC 2.A.4) family. SLC30A subfamily.

Its subcellular location is the vacuole membrane. Functionally, involved in sequestration of excess metal in the cytoplasm into vacuoles to maintain metal homeostasis. This chain is Metal tolerance protein 12 (MTP12), found in Arabidopsis thaliana (Mouse-ear cress).